A 155-amino-acid polypeptide reads, in one-letter code: Protein SREK1IP1 (155 aa).

The CCHC-type zinc finger occupies 13 to 30; that stretch reads AGCKKCGYPGHLTFECRN. Residues 44–155 form a disordered region; that stretch reads VSSTSSEDSD…TPNSSEFSRK (112 aa). At serine 52 the chain carries Phosphoserine. Residues 66–84 are compositionally biased toward basic and acidic residues; sequence QEKRINEEEEKKKEKSKEK. The segment covering 85–94 has biased composition (basic residues); that stretch reads IKLKKKRKRS. Residues serine 96 and serine 97 each carry the phosphoserine modification. Positions 107–142 are enriched in basic residues; the sequence is QKKQKYQKKEKKKEKKSKSKKGKHHKKEKKKRKKEK. The residue at position 146 (threonine 146) is a Phosphothreonine. A compositionally biased stretch (polar residues) spans 146-155; that stretch reads TPNSSEFSRK.

As to quaternary structure, interacts with SREK1/SFRS12.

Functionally, possible splicing regulator involved in the control of cellular survival. The sequence is that of Protein SREK1IP1 (SREK1IP1) from Homo sapiens (Human).